Reading from the N-terminus, the 259-residue chain is GTP cyclohydrolase FolE2 (259 aa).

This sequence belongs to the GTP cyclohydrolase IV family.

The enzyme catalyses GTP + H2O = 7,8-dihydroneopterin 3'-triphosphate + formate + H(+). It participates in cofactor biosynthesis; 7,8-dihydroneopterin triphosphate biosynthesis; 7,8-dihydroneopterin triphosphate from GTP: step 1/1. Functionally, converts GTP to 7,8-dihydroneopterin triphosphate. This chain is GTP cyclohydrolase FolE2, found in Thermosipho melanesiensis (strain DSM 12029 / CIP 104789 / BI429).